Consider the following 625-residue polypeptide: Vacuolar-sorting receptor 7 (625 aa).

A signal peptide spans 1-26 (MGLVNGRASLTFLLAALTIIAMVVEA). At 27 to 564 (RFVVEKESIS…CIERYGSKTA (538 aa)) the chain is on the lumenal side. One can recognise a PA domain in the interval 58–166 (DYGGFLIGSV…SFGDDLRQGF (109 aa)). N292, N400, and N432 each carry an N-linked (GlcNAc...) asparagine glycan. EGF-like domains are found at residues 414 to 464 (ETNE…TSCT) and 467 to 513 (GPAR…LTCE). Intrachain disulfides connect C418–C436, C425–C445, C447–C463, C471–C491, C478–C499, C501–C512, and C542–C555. The 43-residue stretch at 514 to 556 (DINECKERSVCQCSGCRCKNSWGGYKCSCSGDRLYINDQDTCI) folds into the EGF-like 3; calcium-binding domain. Residues 565-585 (WWLTFLILAIVAVAGLAGYIF) traverse the membrane as a helical segment. Residues 586-625 (YKYRFRSYMDSEIMTIMSQYMPLESQRAREVPSEAEPFTL) are Cytoplasmic-facing. The Tyrosine-based internalization motif motif lies at 605–608 (YMPL).

This sequence belongs to the VSR (BP-80) family. Expressed at low levels in seedlings, roots, young leaves, flowers and siliques.

Its subcellular location is the golgi apparatus membrane. Vacuolar-sorting receptor (VSR) involved in clathrin-coated vesicles sorting from Golgi apparatus to vacuoles. This chain is Vacuolar-sorting receptor 7 (VSR7), found in Arabidopsis thaliana (Mouse-ear cress).